The primary structure comprises 514 residues: ATP synthase subunit alpha (514 aa).

Residue 170–177 (GDRQIGKT) coordinates ATP.

It belongs to the ATPase alpha/beta chains family. F-type ATPases have 2 components, CF(1) - the catalytic core - and CF(0) - the membrane proton channel. CF(1) has five subunits: alpha(3), beta(3), gamma(1), delta(1), epsilon(1). CF(0) has three main subunits: a(1), b(2) and c(9-12). The alpha and beta chains form an alternating ring which encloses part of the gamma chain. CF(1) is attached to CF(0) by a central stalk formed by the gamma and epsilon chains, while a peripheral stalk is formed by the delta and b chains.

The protein localises to the cell inner membrane. The enzyme catalyses ATP + H2O + 4 H(+)(in) = ADP + phosphate + 5 H(+)(out). In terms of biological role, produces ATP from ADP in the presence of a proton gradient across the membrane. The alpha chain is a regulatory subunit. The sequence is that of ATP synthase subunit alpha from Ectopseudomonas mendocina (strain ymp) (Pseudomonas mendocina).